The chain runs to 205 residues: Holliday junction branch migration complex subunit RuvA (205 aa).

Residues 1–64 form a domain I region; sequence MIGKLKGVVD…EDQIRLFGFS (64 aa). The interval 65–143 is domain II; sequence SAAERDWFRL…GFSASEPLAA (79 aa). Residues 144–152 are flexible linker; sequence QLGGGGVAS. A domain III region spans residues 153–205; that stretch reads AQGGAAADAVSALVNLGYGVPQANAAIAAALRGAGEGAKTEVLIRLGLKELAK.

This sequence belongs to the RuvA family. As to quaternary structure, homotetramer. Forms an RuvA(8)-RuvB(12)-Holliday junction (HJ) complex. HJ DNA is sandwiched between 2 RuvA tetramers; dsDNA enters through RuvA and exits via RuvB. An RuvB hexamer assembles on each DNA strand where it exits the tetramer. Each RuvB hexamer is contacted by two RuvA subunits (via domain III) on 2 adjacent RuvB subunits; this complex drives branch migration. In the full resolvosome a probable DNA-RuvA(4)-RuvB(12)-RuvC(2) complex forms which resolves the HJ.

Its subcellular location is the cytoplasm. In terms of biological role, the RuvA-RuvB-RuvC complex processes Holliday junction (HJ) DNA during genetic recombination and DNA repair, while the RuvA-RuvB complex plays an important role in the rescue of blocked DNA replication forks via replication fork reversal (RFR). RuvA specifically binds to HJ cruciform DNA, conferring on it an open structure. The RuvB hexamer acts as an ATP-dependent pump, pulling dsDNA into and through the RuvAB complex. HJ branch migration allows RuvC to scan DNA until it finds its consensus sequence, where it cleaves and resolves the cruciform DNA. This Xanthobacter autotrophicus (strain ATCC BAA-1158 / Py2) protein is Holliday junction branch migration complex subunit RuvA.